An 86-amino-acid chain; its full sequence is Putative pro-MCH-like protein 1 (86 aa).

Positions 31 to 49 (GSVAFPAENGVQDTESTQE) are NGE-like. The segment at 38-62 (ENGVQDTESTQEKRETGDEENSAKF) is disordered. Residues 52–64 (ETGDEENSAKFPV) form an NEI-like region. The melanin-concentrating hormone-like stretch occupies residues 68–86 (DFDTLSCMLGRVYQSCWQV).

It belongs to the melanin-concentrating hormone family. As to expression, expressed in testis and brain.

In Homo sapiens (Human), this protein is Putative pro-MCH-like protein 1 (PMCHL1).